Reading from the N-terminus, the 211-residue chain is Metalloproteinase inhibitor 3 (211 aa).

The signal sequence occupies residues 1–23 (MTPWLGLVVLLGSWSLGDWGAEA). Residue C24 participates in Zn(2+) binding. Involved in metalloproteinase-binding stretches follow at residues 24–27 (CTCS) and 88–89 (ES). Intrachain disulfides connect C24/C91, C26/C118, C36/C143, C145/C192, C150/C155, and C163/C184. The region spanning 24 to 143 (CTCSPSHPQD…GLNYRYHLGC (120 aa)) is the NTR domain. The tract at residues 105–188 (TGRVYDGKMY…SKHYACIRQK (84 aa)) is mediates interaction with EFEMP1. The N-linked (GlcNAc...) asparagine glycan is linked to N207.

This sequence belongs to the protease inhibitor I35 (TIMP) family. In terms of assembly, interacts with EFEMP1. Interacts with KDR.

The protein localises to the secreted. It is found in the extracellular space. It localises to the extracellular matrix. Functionally, mediates a variety of processes including matrix regulation and turnover, inflammation, and angiogenesis, through reversible inhibition of zinc protease superfamily enzymes, primarily matrix metalloproteinases (MMPs). Regulates extracellular matrix (ECM) remodeling through inhibition of matrix metalloproteinases (MMP) including MMP-1, MMP-2, MMP-3, MMP-7, MMP-9, MMP-13, MMP-14 and MMP-15. Additionally, modulates the processing of amyloid precursor protein (APP) and apolipoprotein E receptor ApoER2 by inhibiting two alpha-secretases ADAM10 and ADAM17. Functions as a tumor suppressor and a potent inhibitor of angiogenesis. Exerts its anti-angiogenic effect by directly interacting with vascular endothelial growth factor (VEGF) receptor-2/KDR, preventing its binding to the VEGFA ligand. Selectively induces apoptosis in angiogenic endothelial cells through a caspase-independent cell death pathway. Mechanistically, inhibits matrix-induced focal adhesion kinase PTK2 tyrosine phosphorylation and association with paxillin/PXN and disrupts the incorporation of ITGB3, PTK2 and PXN into focal adhesion contacts on the matrix. This Equus caballus (Horse) protein is Metalloproteinase inhibitor 3 (TIMP3).